An 89-amino-acid chain; its full sequence is Probable Fe(2+)-trafficking protein (89 aa).

The protein belongs to the Fe(2+)-trafficking protein family.

Its function is as follows. Could be a mediator in iron transactions between iron acquisition and iron-requiring processes, such as synthesis and/or repair of Fe-S clusters in biosynthetic enzymes. The protein is Probable Fe(2+)-trafficking protein of Acinetobacter baumannii (strain AB0057).